The sequence spans 339 residues: Ketol-acid reductoisomerase (NADP(+)) (339 aa).

The KARI N-terminal Rossmann domain occupies 1–182; sequence MRVYYDRDAD…GGGRAGIIET (182 aa). Residues 24–27, R48, S51, T53, and 83–86 contribute to the NADP(+) site; these read YGSQ and DELQ. H108 is an active-site residue. Residue G134 participates in NADP(+) binding. The 146-residue stretch at 183–328 folds into the KARI C-terminal knotted domain; sequence TFKEECETDL…AKLRGMMPWI (146 aa). Mg(2+) is bound by residues D191, E195, E227, and E231. Substrate is bound at residue S252.

It belongs to the ketol-acid reductoisomerase family. Mg(2+) is required as a cofactor.

The enzyme catalyses (2R)-2,3-dihydroxy-3-methylbutanoate + NADP(+) = (2S)-2-acetolactate + NADPH + H(+). It catalyses the reaction (2R,3R)-2,3-dihydroxy-3-methylpentanoate + NADP(+) = (S)-2-ethyl-2-hydroxy-3-oxobutanoate + NADPH + H(+). The protein operates within amino-acid biosynthesis; L-isoleucine biosynthesis; L-isoleucine from 2-oxobutanoate: step 2/4. It participates in amino-acid biosynthesis; L-valine biosynthesis; L-valine from pyruvate: step 2/4. Involved in the biosynthesis of branched-chain amino acids (BCAA). Catalyzes an alkyl-migration followed by a ketol-acid reduction of (S)-2-acetolactate (S2AL) to yield (R)-2,3-dihydroxy-isovalerate. In the isomerase reaction, S2AL is rearranged via a Mg-dependent methyl migration to produce 3-hydroxy-3-methyl-2-ketobutyrate (HMKB). In the reductase reaction, this 2-ketoacid undergoes a metal-dependent reduction by NADPH to yield (R)-2,3-dihydroxy-isovalerate. The chain is Ketol-acid reductoisomerase (NADP(+)) from Methylorubrum populi (strain ATCC BAA-705 / NCIMB 13946 / BJ001) (Methylobacterium populi).